A 97-amino-acid polypeptide reads, in one-letter code: Na(+)/H(+) antiporter subunit F1 (97 aa).

Transmembrane regions (helical) follow at residues 3 to 23 (HNVI…AMLI), 35 to 55 (VVAL…FSIL), and 60 to 80 (YMIV…AVFS).

Belongs to the CPA3 antiporters (TC 2.A.63) subunit F family. As to quaternary structure, may form a heterooligomeric complex that consists of seven subunits: mnhA1, mnhB1, mnhC1, mnhD1, mnhE1, mnhF1 and mnhG1.

It is found in the cell membrane. Mnh complex is a Na(+)/H(+) antiporter involved in Na(+) excretion. The protein is Na(+)/H(+) antiporter subunit F1 (mnhF1) of Staphylococcus aureus (strain Mu3 / ATCC 700698).